A 573-amino-acid polypeptide reads, in one-letter code: Squalene monooxygenase (573 aa).

The Cytoplasmic segment spans residues 1–19 (MWTFLGIATFTYFYKKCGD). The interval 1 to 99 (MWTFLGIATF…EQLESKRRRK (99 aa)) is interaction with MARCHF6. The stretch at 20-40 (VTLANKELLLCVLVFLSLGLV) is an intramembrane region. Residues 41-573 (LSYRCRHRNG…IYSEMKYLVH (533 aa)) lie on the Cytoplasmic side of the membrane. The required for degradation in response to high membrane cholesterol levels stretch occupies residues 61-72 (QFAAFSDILSAL). The interval 100–573 (EVNLSETTLT…IYSEMKYLVH (474 aa)) is sufficient for catalytic activity. Residues 132–133 (VL), 152–153 (ER), Arg160, Arg233, Val249, Asp407, and Met420 each bind FAD. Positions 515–573 (PLLLIRHFFSVAVYATYFCFKSEPWATKPRALFSSGAILYKACSIIFPLIYSEMKYLVH) are hydrophobic; mediates interaction with membranes.

This sequence belongs to the squalene monooxygenase family. Interacts (via N-terminal domain) with MARCHF6. Interacts with SMIM22; this interaction modulates lipid droplet formation. The cofactor is FAD. In terms of processing, ubiquitinated by MARCHF6 in response to high cholesterol levels in intracellular membranes, leading to proteasomal degradation. Detected in lever (at protein level).

It is found in the microsome membrane. The protein resides in the endoplasmic reticulum membrane. It carries out the reaction squalene + reduced [NADPH--hemoprotein reductase] + O2 = (S)-2,3-epoxysqualene + oxidized [NADPH--hemoprotein reductase] + H2O + H(+). It participates in terpene metabolism; lanosterol biosynthesis; lanosterol from farnesyl diphosphate: step 2/3. Inhibited by NB-598 ((E)N-ethyl-N-(6,6-dimethyl-2-hepten-4-ynyl)-3-[(3,3'-bi-thiophen-5-yl)methoxy]benzene-methanamine). Contrary to fungal enzymes, the mammalian enzyme is only slightly inhibited by terbinafine. In terms of biological role, catalyzes the stereospecific oxidation of squalene to (S)-2,3-epoxysqualene, and is considered to be a rate-limiting enzyme in steroid biosynthesis. This Rattus norvegicus (Rat) protein is Squalene monooxygenase (Sqle).